We begin with the raw amino-acid sequence, 425 residues long: Arogenate dehydratase 5, chloroplastic (425 aa).

The transit peptide at M1–R38 directs the protein to the chloroplast. A Prephenate dehydratase domain is found at R127–R304. Residues V320–P411 form the ACT domain.

In terms of tissue distribution, expressed in roots, leaves, stems, flowers and siliques. More abundant in stems and roots.

Its subcellular location is the plastid. It is found in the chloroplast stroma. The catalysed reaction is L-arogenate + H(+) = L-phenylalanine + CO2 + H2O. The protein operates within amino-acid biosynthesis; L-phenylalanine biosynthesis; L-phenylalanine from L-arogenate: step 1/1. Functionally, converts the prephenate produced from the shikimate-chorismate pathway into phenylalanine. The chain is Arogenate dehydratase 5, chloroplastic from Arabidopsis thaliana (Mouse-ear cress).